We begin with the raw amino-acid sequence, 151 residues long: UPF0178 protein Sde_3033 (151 aa).

It belongs to the UPF0178 family.

The sequence is that of UPF0178 protein Sde_3033 from Saccharophagus degradans (strain 2-40 / ATCC 43961 / DSM 17024).